A 147-amino-acid polypeptide reads, in one-letter code: Sentan (147 aa).

A disordered region spans residues 1-36 (MGGCMHSTWDHALHSRGEPRPSEAPASISAPSKMPK). The segment covering 8 to 21 (TWDHALHSRGEPRP) has biased composition (basic and acidic residues). The segment covering 23–32 (EAPASISAPS) has biased composition (low complexity).

It belongs to the S-100 family. In terms of tissue distribution, expressed exclusively in ciliated epithelial cells. Detected in ciliated epithelium of trachea and oviduct (at protein level).

The protein localises to the cell projection. It localises to the cilium. In terms of biological role, may be a component of the linker structure that bridges the ciliary membrane and peripheral singlet microtubules. The sequence is that of Sentan (Sntn) from Mus musculus (Mouse).